We begin with the raw amino-acid sequence, 172 residues long: Adenine phosphoribosyltransferase (172 aa).

This sequence belongs to the purine/pyrimidine phosphoribosyltransferase family. As to quaternary structure, homodimer.

Its subcellular location is the cytoplasm. It catalyses the reaction AMP + diphosphate = 5-phospho-alpha-D-ribose 1-diphosphate + adenine. It functions in the pathway purine metabolism; AMP biosynthesis via salvage pathway; AMP from adenine: step 1/1. Its function is as follows. Catalyzes a salvage reaction resulting in the formation of AMP, that is energically less costly than de novo synthesis. The polypeptide is Adenine phosphoribosyltransferase (Pediococcus pentosaceus (strain ATCC 25745 / CCUG 21536 / LMG 10740 / 183-1w)).